Consider the following 768-residue polypeptide: Protein ITPRID2 (768 aa).

Disordered stretches follow at residues 1 to 24 (MTTE…AEDS), 39 to 78 (LQAM…ESEE), and 98 to 124 (RKSG…CSPG). 2 stretches are compositionally biased toward polar residues: residues 39–57 (LQAM…TVTS) and 102–122 (SQDF…STCS). Phosphoserine occurs at positions 153, 177, 246, 248, 255, 268, 276, and 312. Residues 315 to 338 (SVKKEEAPQSEAPRVEECHHGRTP) are disordered. The span at 316–334 (VKKEEAPQSEAPRVEECHH) shows a compositional bias: basic and acidic residues. Lys-317 participates in a covalent cross-link: Glycyl lysine isopeptide (Lys-Gly) (interchain with G-Cter in SUMO2). Phosphoserine is present on residues Ser-378 and Ser-411. A coiled-coil region spans residues 468 to 546 (QELQVMRRSL…GLEEQLRAVR (79 aa)). A phosphoserine mark is found at Ser-549, Ser-564, Ser-569, Ser-572, Ser-627, and Ser-643. Disordered regions lie at residues 605–647 (IPPG…VGKP) and 663–718 (ALTP…AAEE). Residues 610-627 (SSESVFSQATSESSSVCS) show a composition bias toward polar residues. Thr-665 bears the Phosphothreonine mark. The segment covering 667–677 (TAPSRTGSVQT) has biased composition (polar residues). Position 670 is a phosphoserine (Ser-670). Thr-677 carries the phosphothreonine modification. Residues 682-694 (ESSEEVDAAEEAP) are compositionally biased toward acidic residues.

It localises to the cytoplasm. This Pongo abelii (Sumatran orangutan) protein is Protein ITPRID2.